Here is a 347-residue protein sequence, read N- to C-terminus: NADH-ubiquinone oxidoreductase chain 2 (347 aa).

A run of 11 helical transmembrane segments spans residues 1–21 (MNPI…MIVM), 25–45 (HWLM…PILM), 60–80 (FLTQ…NLMF), 89–109 (IFNP…LGLS), 111–131 (FHFW…LILL), 149–169 (INLD…GWGG), 178–198 (IMAY…TYNP), 201–221 (TALN…LFML), 242–262 (SLIL…GFIP), 274–294 (DSII…YFYM), and 323–343 (MNFL…TPIM).

The protein belongs to the complex I subunit 2 family. In terms of assembly, core subunit of respiratory chain NADH dehydrogenase (Complex I) which is composed of 45 different subunits. Interacts with TMEM242.

It localises to the mitochondrion inner membrane. It catalyses the reaction a ubiquinone + NADH + 5 H(+)(in) = a ubiquinol + NAD(+) + 4 H(+)(out). In terms of biological role, core subunit of the mitochondrial membrane respiratory chain NADH dehydrogenase (Complex I) which catalyzes electron transfer from NADH through the respiratory chain, using ubiquinone as an electron acceptor. Essential for the catalytic activity and assembly of complex I. The chain is NADH-ubiquinone oxidoreductase chain 2 from Ceratotherium simum (White rhinoceros).